The sequence spans 210 residues: Chaperone protein TorD (210 aa).

Belongs to the TorD/DmsD family. TorD subfamily.

Its subcellular location is the cytoplasm. In terms of biological role, involved in the biogenesis of TorA. Acts on TorA before the insertion of the molybdenum cofactor and, as a result, probably favors a conformation of the apoenzyme that is competent for acquiring the cofactor. The protein is Chaperone protein TorD of Salmonella choleraesuis (strain SC-B67).